We begin with the raw amino-acid sequence, 932 residues long: DNA mismatch repair protein MutS (932 aa).

Residue 615–622 (GPNMAGKS) participates in ATP binding.

Belongs to the DNA mismatch repair MutS family.

Its function is as follows. This protein is involved in the repair of mismatches in DNA. It is possible that it carries out the mismatch recognition step. This protein has a weak ATPase activity. In Clostridium botulinum (strain Hall / ATCC 3502 / NCTC 13319 / Type A), this protein is DNA mismatch repair protein MutS.